The following is a 136-amino-acid chain: Large ribosomal subunit protein uL16c (136 aa).

The segment covering 1 to 17 (MLSPKRVKFRKQHRGRM) has biased composition (basic residues). Residues 1-25 (MLSPKRVKFRKQHRGRMKGISTRGN) are disordered.

The protein belongs to the universal ribosomal protein uL16 family. In terms of assembly, part of the 50S ribosomal subunit.

The protein resides in the plastid. It is found in the chloroplast. This Anthoceros angustus (Hornwort) protein is Large ribosomal subunit protein uL16c.